Here is a 237-residue protein sequence, read N- to C-terminus: Ribonuclease PH (237 aa).

Phosphate-binding positions include Arg-86 and 124–126 (GTR).

It belongs to the RNase PH family. In terms of assembly, homohexameric ring arranged as a trimer of dimers.

It carries out the reaction tRNA(n+1) + phosphate = tRNA(n) + a ribonucleoside 5'-diphosphate. Its function is as follows. Phosphorolytic 3'-5' exoribonuclease that plays an important role in tRNA 3'-end maturation. Removes nucleotide residues following the 3'-CCA terminus of tRNAs; can also add nucleotides to the ends of RNA molecules by using nucleoside diphosphates as substrates, but this may not be physiologically important. Probably plays a role in initiation of 16S rRNA degradation (leading to ribosome degradation) during starvation. The protein is Ribonuclease PH of Pseudoalteromonas translucida (strain TAC 125).